Reading from the N-terminus, the 370-residue chain is Ubiquitin carboxyl-terminal hydrolase 12 (370 aa).

A Required for plasma membrane localization of USP12/WDR20 motif is present at residues methionine 1–leucine 4. The region spanning phenylalanine 39–arginine 369 is the USP domain. Cysteine 48 (nucleophile) is an active-site residue. Residues glutamine 146–aspartate 157 show a composition bias toward basic and acidic residues. The interval glutamine 146–aspartate 168 is disordered. The Zn(2+) site is built by cysteine 186, cysteine 189, cysteine 233, and cysteine 236. Histidine 317 serves as the catalytic Proton acceptor.

It belongs to the peptidase C19 family. USP12/USP46 subfamily. In terms of assembly, interacts with WDR48. Interacts with WDR20; this interaction promotes translocation of the USP12 complex to the plasma membrane. Component of the USP12-WDR20-WDR48 deubiquitinating complex. Component of the USP12-DMWD-WDR48 deubiquitinating complex. Interacts with PHLPP1. Interacts with RBPJ. Interacts with CBP; this interaction blocks the acetyltransferase activity of CREBBP. Interacts with ITCH; the interaction is more efficient when both USP12 and WDR48/UAF1 are involved and may mediate recruitment of the USP12 deubiquitinating complex to Notch.

The protein localises to the nucleus. It is found in the cytoplasm. The protein resides in the cell membrane. It carries out the reaction Thiol-dependent hydrolysis of ester, thioester, amide, peptide and isopeptide bonds formed by the C-terminal Gly of ubiquitin (a 76-residue protein attached to proteins as an intracellular targeting signal).. With respect to regulation, activated by interaction with WDR20, WDR48 and DMWD through different allosteric mechanisms. Deubiquitinating enzyme that plays various roles in the regulation of the immune response and inflammation. During TCR engagement and activation, translocates into the cytoplasm and deubiquitinates its substrates LAT and TRAT1 and prevents their lysosome-dependent degradation to stabilize the TCR signaling complex at the plasma membrane. Plays an essential role in the selective LPS-induced macrophage response through the activation of NF-kappa-B pathway. In addition, promotes that antiviral immune response through targeting DNA sensor IFI16 to inhibit its proteasome-dependent degradation. Participates in the interferon signaling pathway and antiviral response independently of its deubiquitinase activity by maintaining nuclear phosphorylated STAT1 levels via inhibition of its CREBBP-mediated acetylation and subsequent dephosphorylation. Plays an intrinsic role in promoting the differentiation, activation and proliferation of CD4(+) T-cell by activating the NF-kappa-B signaling pathway through deubiquitinating and stabilizing B-cell lymphoma/leukemia 10/BCL10. In myeloid-derived suppressor cells promotes the activation of the NF-kappa-B via deubiquitination and stabilization of RELA. Regulates the 'Lys-63'-linked polyubiquitin chains of BAX and thereby modulates the mitochondrial apoptotic process. Negative regulator of NOTCH signaling that specifically deubiquitinates non-activated NOTCH receptors to target them for lysosomal degradation; deubiquitination of NOTCH stimulates its transport form late endosomes to lysosomes. Protects neurons against HTT/huntingtin-induced polyglutamine expansion-dependent neurodegeneration through regulation of autophagic flux. This function is independent of deubiquitinase activity or of other components of the USP12-WDR20-WDR48 deubiquitinating complex. In complex with WDR48, acts as a potential tumor suppressor by positively regulating PHLPP1 stability. The polypeptide is Ubiquitin carboxyl-terminal hydrolase 12 (Rattus norvegicus (Rat)).